We begin with the raw amino-acid sequence, 967 residues long: Kinesin heavy chain (967 aa).

The 319-residue stretch at 8-326 (NIKVICRVRP…LLFGQRAKTI (319 aa)) folds into the Kinesin motor domain. 85 to 92 (GQTSSGKT) serves as a coordination point for ATP. A microtubule-binding region spans residues 173-314 (VSSPEEVMEV…PASYNESETK (142 aa)). 2 disordered regions span residues 387 to 411 (VPAE…NEGD) and 923 to 967 (KPIR…ESKA). Positions 392 to 861 (PATSTTSLAG…RDNADLRCEL (470 aa)) form a coiled coil. The segment at 862 to 967 (PKLEKRLRAT…PIRMAPESKA (106 aa)) is globular. Residues 949-958 (QNGPMITSTP) are compositionally biased toward polar residues.

The protein belongs to the TRAFAC class myosin-kinesin ATPase superfamily. Kinesin family. Kinesin subfamily. Oligomer composed of two heavy chains and two light chains. Interacts with amyloid-beta precursor-like protein (via cytoplasmic domain).

The protein resides in the cytoplasm. It is found in the cytoskeleton. Its subcellular location is the cell projection. The protein localises to the axon. Kinesin is a microtubule-associated force-producing protein that may play a role in organelle transport. This is Kinesin heavy chain from Doryteuthis pealeii (Longfin inshore squid).